The sequence spans 80 residues: Metallothionein-like protein type 2, MT2-28 (80 aa).

This sequence belongs to the metallothionein superfamily. Type 15 family.

Functionally, metallothioneins have a high content of cysteine residues that bind various heavy metals. This is Metallothionein-like protein type 2, MT2-28 from Brassica juncea (Indian mustard).